A 744-amino-acid chain; its full sequence is Tripartite motif-containing protein 2 (744 aa).

A Phosphoserine modification is found at S10. Residues 23 to 64 form an RING-type zinc finger; that stretch reads CSICLERYKNPKVLPCLHTFCERCLQNYIPAHSLTLSCPVCR. A B box-type zinc finger spans residues 113-154; the sequence is GKPLSCPNHDGNVMEFYCQSCETAMCRECTEGEHAEHPTVPL. C118, H121, C141, and H146 together coordinate Zn(2+). The Filamin repeat unit spans residues 320–421; the sequence is TTNAVASETV…IRGSPFKLKV (102 aa). Position 371 is a phosphothreonine (T371). 3 positions are modified to phosphoserine: S375, S424, and S428. Residues 432–462 are disordered; the sequence is EGVKRRVKSPGSGHVKQKAVKRPASMYSTGK. NHL repeat units follow at residues 473 to 516, 520 to 563, 564 to 605, 609 to 652, 656 to 699, and 700 to 743; these read IFRV…FSND, KSRF…FSSD, GKFK…FQPN, VTRF…FNQE, MLKF…FDGS, and GSFL…YRYL.

The protein belongs to the TRIM/RBCC family. As to quaternary structure, forms homooligomers. Interacts with TRIM3; this interaction reduces TRIM2 activity. Interacts with myosin V; myosin V may not be a substrate for ubiquitination. Interacts with NEFL. Interacts with phosphorylated BCL2L11. Interacts with SIRPA. In terms of processing, RING-type zinc finger-dependent and UBE2D1-dependent autoubiquitination.

The protein resides in the cytoplasm. It catalyses the reaction S-ubiquitinyl-[E2 ubiquitin-conjugating enzyme]-L-cysteine + [acceptor protein]-L-lysine = [E2 ubiquitin-conjugating enzyme]-L-cysteine + N(6)-ubiquitinyl-[acceptor protein]-L-lysine.. The protein operates within protein modification; protein ubiquitination. Its function is as follows. UBE2D1-dependent E3 ubiquitin-protein ligase that mediates the ubiquitination of NEFL and of phosphorylated BCL2L11. Plays a neuroprotective function. May play a role in neuronal rapid ischemic tolerance. Plays a role in antiviral immunity and limits New World arenavirus infection independently of its ubiquitin ligase activity. In Homo sapiens (Human), this protein is Tripartite motif-containing protein 2 (TRIM2).